Reading from the N-terminus, the 126-residue chain is Glycine cleavage system H protein (126 aa).

In terms of domain architecture, Lipoyl-binding spans isoleucine 22–lysine 104. Lysine 63 bears the N6-lipoyllysine mark.

The protein belongs to the GcvH family. As to quaternary structure, the glycine cleavage system is composed of four proteins: P, T, L and H. Requires (R)-lipoate as cofactor.

Its function is as follows. The glycine cleavage system catalyzes the degradation of glycine. The H protein shuttles the methylamine group of glycine from the P protein to the T protein. This is Glycine cleavage system H protein from Bacteroides thetaiotaomicron (strain ATCC 29148 / DSM 2079 / JCM 5827 / CCUG 10774 / NCTC 10582 / VPI-5482 / E50).